The following is a 184-amino-acid chain: Endoribonuclease YbeY (184 aa).

H151, H155, and H161 together coordinate Zn(2+).

It belongs to the endoribonuclease YbeY family. It depends on Zn(2+) as a cofactor.

It is found in the cytoplasm. Single strand-specific metallo-endoribonuclease involved in late-stage 70S ribosome quality control and in maturation of the 3' terminus of the 16S rRNA. This is Endoribonuclease YbeY from Prochlorococcus marinus (strain NATL2A).